A 444-amino-acid polypeptide reads, in one-letter code: Glutamyl-tRNA reductase (444 aa).

Substrate is bound by residues 49 to 52 (TCNR), Ser-109, 114 to 116 (ETQ), and Gln-120. Residue Cys-50 is the Nucleophile of the active site. 189 to 194 (GAGKMG) is a binding site for NADP(+).

The protein belongs to the glutamyl-tRNA reductase family. Homodimer.

It carries out the reaction (S)-4-amino-5-oxopentanoate + tRNA(Glu) + NADP(+) = L-glutamyl-tRNA(Glu) + NADPH + H(+). It participates in porphyrin-containing compound metabolism; protoporphyrin-IX biosynthesis; 5-aminolevulinate from L-glutamyl-tRNA(Glu): step 1/2. Catalyzes the NADPH-dependent reduction of glutamyl-tRNA(Glu) to glutamate 1-semialdehyde (GSA). This Bacillus cereus (strain AH187) protein is Glutamyl-tRNA reductase.